A 143-amino-acid polypeptide reads, in one-letter code: D-aminoacyl-tRNA deacylase (143 aa).

Positions 135–136 (GP) match the Gly-cisPro motif, important for rejection of L-amino acids motif.

This sequence belongs to the DTD family. In terms of assembly, homodimer.

The protein localises to the cytoplasm. The catalysed reaction is glycyl-tRNA(Ala) + H2O = tRNA(Ala) + glycine + H(+). It carries out the reaction a D-aminoacyl-tRNA + H2O = a tRNA + a D-alpha-amino acid + H(+). In terms of biological role, an aminoacyl-tRNA editing enzyme that deacylates mischarged D-aminoacyl-tRNAs. Also deacylates mischarged glycyl-tRNA(Ala), protecting cells against glycine mischarging by AlaRS. Acts via tRNA-based rather than protein-based catalysis; rejects L-amino acids rather than detecting D-amino acids in the active site. By recycling D-aminoacyl-tRNA to D-amino acids and free tRNA molecules, this enzyme counteracts the toxicity associated with the formation of D-aminoacyl-tRNA entities in vivo and helps enforce protein L-homochirality. In Mycobacterium avium (strain 104), this protein is D-aminoacyl-tRNA deacylase.